Reading from the N-terminus, the 467-residue chain is Ribosome biogenesis protein YTM1 (467 aa).

The ubiquitin-like (UBL) domain stretch occupies residues 8-95; sequence IKIKFFTNEE…ETFLSLEYTR (88 aa). The tract at residues 105–467 is sufficient for interaction with ERB1 and association with 66S pre-ribosomes; the sequence is SFNNEDWISS…QINKGSDISK (363 aa). WD repeat units follow at residues 120 to 159, 161 to 199, 216 to 255, 293 to 333, 335 to 374, 382 to 422, and 432 to 467; these read KTLP…EKQY, GHSG…GSIP, GHKA…MTTI, SHTQ…CIDT, STGY…NTTE, GHTN…SLYT, and KGAD…DISK.

The protein belongs to the WD repeat WDR12/YTM1 family. Component of the NOP7 complex, composed of ERB1, NOP7 and YTM1. The complex is held together by ERB1, which interacts with NOP7 via its N-terminal domain and with YTM1 via a high-affinity interaction between the seven-bladed beta-propeller domains of the 2 proteins. The NOP7 complex associates with the 66S pre-ribosome. Interacts (via UBL domain) with MDN1 (via VWFA/MIDAS domain).

The protein resides in the nucleus. The protein localises to the nucleolus. It is found in the nucleoplasm. Its function is as follows. Component of the NOP7 complex, which is required for maturation of the 25S and 5.8S ribosomal RNAs and formation of the 60S ribosome. The protein is Ribosome biogenesis protein YTM1 of Scheffersomyces stipitis (strain ATCC 58785 / CBS 6054 / NBRC 10063 / NRRL Y-11545) (Yeast).